The chain runs to 1305 residues: Cyclin-G-associated kinase (1305 aa).

Position 2 is an N-acetylserine (Ser-2). 2 positions are modified to phosphoserine: Ser-2 and Ser-16. A Protein kinase domain is found at 40–317; sequence LRVRRVLAEG…EVVRQLQEIA (278 aa). ATP contacts are provided by residues 46 to 54 and Lys-69; that span reads LAEGGFAFV. Residue Asp-173 is the Proton acceptor of the active site. In terms of domain architecture, Phosphatase tensin-type spans 397–564; sequence SVANYAKGDL…EYVCDMVAEE (168 aa). Residue Ser-454 is modified to Phosphoserine. A C2 tensin-type domain is found at 570-708; sequence SKPMLVKSVV…FQVNLEVEVE (139 aa). Disordered stretches follow at residues 707-732 and 747-854; these read VEPRDRPSREAPPWENTSLRGLNPKI and FGKP…AAGT. Ser-768 carries the phosphoserine modification. Position 774 is a phosphothreonine (Thr-774). Positions 776–789 are enriched in polar residues; sequence SDSPQSSSTDTNHF. Ser-781 carries the post-translational modification Phosphoserine. Thr-792 bears the Phosphothreonine mark. Residues 805–816 show a composition bias toward polar residues; sequence LDNTSPKESQSV. Phosphoserine occurs at positions 809, 824, and 827. Positions 822–832 are enriched in acidic residues; it reads DGSEVSDEEEA. Over residues 836–848 the composition is skewed to basic and acidic residues; sequence SEERKPGAGEDTP. At Ser-938 the chain carries Phosphoserine. The segment at 1037–1139 is disordered; sequence DTWADTATPG…WTPQAKPAPR (103 aa). Over residues 1084-1099 the composition is skewed to low complexity; sequence DLSDLSSSLQGLPAGL. Polar residues predominate over residues 1111-1132; that stretch reads TQKSNSPWQANRPTAPGTSWTP. An Omega-N-methylarginine modification is found at Arg-1122. Ser-1171 is modified (phosphoserine). The 65-residue stretch at 1241 to 1305 folds into the J domain; the sequence is SRWTPVSMAD…FENQGSRPLF (65 aa).

The protein belongs to the protein kinase superfamily. Ser/Thr protein kinase family.

Its subcellular location is the cytoplasm. The protein resides in the perinuclear region. It is found in the golgi apparatus. The protein localises to the trans-Golgi network. It localises to the cell junction. Its subcellular location is the focal adhesion. The protein resides in the cytoplasmic vesicle. It is found in the clathrin-coated vesicle. It catalyses the reaction L-seryl-[protein] + ATP = O-phospho-L-seryl-[protein] + ADP + H(+). The catalysed reaction is L-threonyl-[protein] + ATP = O-phospho-L-threonyl-[protein] + ADP + H(+). Its function is as follows. Associates with cyclin G and CDK5. Seems to act as an auxilin homolog that is involved in the uncoating of clathrin-coated vesicles by Hsc70 in non-neuronal cells. Expression oscillates slightly during the cell cycle, peaking at G1. May play a role in clathrin-mediated endocytosis and intracellular trafficking, and in the dynamics of clathrin assembly/disassembly. The protein is Cyclin-G-associated kinase of Mus musculus (Mouse).